The following is a 947-amino-acid chain: Bifunctional glutamine synthetase adenylyltransferase/adenylyl-removing enzyme (947 aa).

The interval 1 to 440 (MTPLSSPLSQ…VFNELIGDDE (440 aa)) is adenylyl removase. The interval 450-947 (SEPWREVWQD…ASWRKWLVAV (498 aa)) is adenylyl transferase.

The protein belongs to the GlnE family. The cofactor is Mg(2+).

The enzyme catalyses [glutamine synthetase]-O(4)-(5'-adenylyl)-L-tyrosine + phosphate = [glutamine synthetase]-L-tyrosine + ADP. The catalysed reaction is [glutamine synthetase]-L-tyrosine + ATP = [glutamine synthetase]-O(4)-(5'-adenylyl)-L-tyrosine + diphosphate. Functionally, involved in the regulation of glutamine synthetase GlnA, a key enzyme in the process to assimilate ammonia. When cellular nitrogen levels are high, the C-terminal adenylyl transferase (AT) inactivates GlnA by covalent transfer of an adenylyl group from ATP to specific tyrosine residue of GlnA, thus reducing its activity. Conversely, when nitrogen levels are low, the N-terminal adenylyl removase (AR) activates GlnA by removing the adenylyl group by phosphorolysis, increasing its activity. The regulatory region of GlnE binds the signal transduction protein PII (GlnB) which indicates the nitrogen status of the cell. This chain is Bifunctional glutamine synthetase adenylyltransferase/adenylyl-removing enzyme, found in Salmonella gallinarum (strain 287/91 / NCTC 13346).